The chain runs to 132 residues: Ribosome-binding factor A (132 aa).

The protein belongs to the RbfA family. Monomer. Binds 30S ribosomal subunits, but not 50S ribosomal subunits or 70S ribosomes.

The protein localises to the cytoplasm. In terms of biological role, one of several proteins that assist in the late maturation steps of the functional core of the 30S ribosomal subunit. Associates with free 30S ribosomal subunits (but not with 30S subunits that are part of 70S ribosomes or polysomes). Required for efficient processing of 16S rRNA. May interact with the 5'-terminal helix region of 16S rRNA. The chain is Ribosome-binding factor A from Pasteurella multocida (strain Pm70).